A 347-amino-acid polypeptide reads, in one-letter code: MWNPKKKSEALAKFKSFPYPKPGTSNVLDSKEGDTRRKYFTKTHLHRLFVFVVLLLCSGYFLKHTLLTRPKESNVVMIFVNNIGGGVLDVKSPRQWELEKISTENKKKYAERHGYHFFVKSTGLKRRYAHEWRESWEKADYIMEAMKKYPHAEWFWWVDLTTFIMEPQYSLEKLIINRLDHIATRNITDSMEFNPKNFHEIPFVDYSEDINFILGQDCNGFSLGSFLVRRSDWTSRLMDFLWDPVVYGQKHMDWPHDEQNAIEYFYENNAWLRSGMGFVPLRLFNSYPPGACAGEGENPRFFYNQKEGDFLVNLAGCNYGRDCLDEINHYKGLAQRKRGWRKLVPFL.

Over 1 to 44 (MWNPKKKSEALAKFKSFPYPKPGTSNVLDSKEGDTRRKYFTKTH) the chain is Cytoplasmic. A helical; Signal-anchor for type II membrane protein membrane pass occupies residues 45-62 (LHRLFVFVVLLLCSGYFL). Topologically, residues 63-347 (KHTLLTRPKE…RGWRKLVPFL (285 aa)) are lumenal.

This sequence belongs to the glycosyltransferase 34 family.

The protein resides in the endoplasmic reticulum membrane. This is an uncharacterized protein from Schizosaccharomyces pombe (strain 972 / ATCC 24843) (Fission yeast).